The primary structure comprises 466 residues: MRNSWVASRKGKTNVSQMHFARKGEITEEMRYVAKRENLPESLVMEEVARGRMVIPANINHMNLEPMAIGIASTCKVNANIGASPNASDISEELKKLDLAVKYGADTLMDLSTGGVNLDEVRTEIINASPIPIGTVPVYQALESVHGSISRLNEDDFLHIIEKHCQQGVDYQTIHAGLLIEHLPKVKGRITGIVSRGGGILAQWMLYHYKQNPLFTRFDDICEIFKRYDCTFSLGDSLRPGCLHDASDEAQLAELKTLGELTRRAWKHDVQVMVEGPGHVPMDQIEFNVRKQMEECSEAPFYVLGPLVTDISPGYDHISSAIGAAMAGWYGTAMLCYVTPKEHLGLPNPEDVREGLIAYKIAAHAADVARHRSGARDRDDELSKARKEFDWNKQFELSLDPERAKQYHDETLPEEIFKKAEFCSMCGPNHCPMNTKITDEDLDKLNDQIQSKGAAELTPVKLNKEN.

Substrate is bound by residues N80, M109, Y139, H175, S195 to G197, D236 to R239, and E275. H279 lines the Zn(2+) pocket. Y302 lines the substrate pocket. H343 is a Zn(2+) binding site. [4Fe-4S] cluster-binding residues include C423, C426, and C431.

The protein belongs to the ThiC family. It depends on [4Fe-4S] cluster as a cofactor.

It carries out the reaction 5-amino-1-(5-phospho-beta-D-ribosyl)imidazole + S-adenosyl-L-methionine = 4-amino-2-methyl-5-(phosphooxymethyl)pyrimidine + CO + 5'-deoxyadenosine + formate + L-methionine + 3 H(+). Its pathway is cofactor biosynthesis; thiamine diphosphate biosynthesis. Functionally, catalyzes the synthesis of the hydroxymethylpyrimidine phosphate (HMP-P) moiety of thiamine from aminoimidazole ribotide (AIR) in a radical S-adenosyl-L-methionine (SAM)-dependent reaction. The chain is Phosphomethylpyrimidine synthase from Prochlorococcus marinus (strain NATL2A).